The primary structure comprises 83 residues: Small ribosomal subunit protein uS17 (83 aa).

Belongs to the universal ribosomal protein uS17 family. As to quaternary structure, part of the 30S ribosomal subunit.

One of the primary rRNA binding proteins, it binds specifically to the 5'-end of 16S ribosomal RNA. The protein is Small ribosomal subunit protein uS17 of Francisella tularensis subsp. holarctica (strain FTNF002-00 / FTA).